The following is a 377-amino-acid chain: Nitric oxide reductase FlRd-NAD(+) reductase (377 aa).

It belongs to the FAD-dependent oxidoreductase family. It depends on FAD as a cofactor.

Its subcellular location is the cytoplasm. The enzyme catalyses 2 reduced [nitric oxide reductase rubredoxin domain] + NAD(+) + H(+) = 2 oxidized [nitric oxide reductase rubredoxin domain] + NADH. It participates in nitrogen metabolism; nitric oxide reduction. One of at least two accessory proteins for anaerobic nitric oxide (NO) reductase. Reduces the rubredoxin moiety of NO reductase. The sequence is that of Nitric oxide reductase FlRd-NAD(+) reductase from Citrobacter koseri (strain ATCC BAA-895 / CDC 4225-83 / SGSC4696).